The following is a 473-amino-acid chain: MSKLIPVIMAGGIGSRLWPLSREEHPKQFLSVDGELSMLQNTIKRLTPLLAGEPLVICNDSHRFLVAEQLRAINKLANNIILEPVGRNTAPAIALAAFCSLQNVVDEDPLLLVLAADHVIRDEKVFLKAINHAEFFATQGKLVTFGIVPTQAETGYGYICRGEAIGEDAFSVAEFVEKPDFDTARHYVESEKYYWNSGMFLFRASSYLQELKDLSPDIYQACENAVGSINPDLDFIRIDKEAFAMCPSDSIDYAVMEHTRHAVVVPMNAGWSDVGSWSSLWDISKKDPQRNVLHGDIFAYNSKDNYIYSEKSFISTIGVNNLVIVQTADALLVSDKDSVQDVKKVVDYLKANNRNEHKKHLEVFRPWGKFSVIHSGDNYLVKRITVKPGAKFAAQMHLHRAEHWIVVSGTACITKGEEIFTISENESTFIPANTVHTLKNPATIPLELIEIQSGTYLAEDDIIRLEKHSGYLE.

Belongs to the mannose-6-phosphate isomerase type 2 family. Homodimer.

It catalyses the reaction alpha-D-mannose 1-phosphate + GTP + H(+) = GDP-alpha-D-mannose + diphosphate. It participates in nucleotide-sugar biosynthesis; GDP-alpha-D-mannose biosynthesis; GDP-alpha-D-mannose from alpha-D-mannose 1-phosphate (GTP route): step 1/1. The protein operates within bacterial outer membrane biogenesis; LPS O-antigen biosynthesis. In terms of biological role, involved in GDP-mannose biosynthesis which serves as the activated sugar nucleotide precursor for mannose residues in cell surface polysaccharides. This enzyme participates in synthesis of the LPS group C2 O antigen. The sequence is that of Mannose-1-phosphate guanylyltransferase (rfbM) from Salmonella muenchen.